The following is a 455-amino-acid chain: Phosphoglucosamine mutase (455 aa).

S108 acts as the Phosphoserine intermediate in catalysis. Positions 108, 246, 248, and 250 each coordinate Mg(2+). Residue S108 is modified to Phosphoserine.

This sequence belongs to the phosphohexose mutase family. Requires Mg(2+) as cofactor. Post-translationally, activated by phosphorylation.

The catalysed reaction is alpha-D-glucosamine 1-phosphate = D-glucosamine 6-phosphate. In terms of biological role, catalyzes the conversion of glucosamine-6-phosphate to glucosamine-1-phosphate. This Frankia alni (strain DSM 45986 / CECT 9034 / ACN14a) protein is Phosphoglucosamine mutase.